Reading from the N-terminus, the 281-residue chain is ATP phosphoribosyltransferase (281 aa).

It belongs to the ATP phosphoribosyltransferase family. Long subfamily. Mg(2+) is required as a cofactor.

It localises to the cytoplasm. The catalysed reaction is 1-(5-phospho-beta-D-ribosyl)-ATP + diphosphate = 5-phospho-alpha-D-ribose 1-diphosphate + ATP. It participates in amino-acid biosynthesis; L-histidine biosynthesis; L-histidine from 5-phospho-alpha-D-ribose 1-diphosphate: step 1/9. Its activity is regulated as follows. Feedback inhibited by histidine. Functionally, catalyzes the condensation of ATP and 5-phosphoribose 1-diphosphate to form N'-(5'-phosphoribosyl)-ATP (PR-ATP). Has a crucial role in the pathway because the rate of histidine biosynthesis seems to be controlled primarily by regulation of HisG enzymatic activity. This is ATP phosphoribosyltransferase from Kocuria rhizophila (strain ATCC 9341 / DSM 348 / NBRC 103217 / DC2201).